Consider the following 2904-residue polypeptide: Highly reducing polyketide synthase bet1 (2904 aa).

A Ketosynthase family 3 (KS3) domain is found at 8–441 (NEPIAIVGSG…GTNAHAIVES (434 aa)). Active-site for beta-ketoacyl synthase activity residues include Cys-181, His-320, and His-361. Residues 553–875 (VFTGQGAQYA…PYHGTLLRGG (323 aa)) are acyl transferase (AT) domain. Residues 948-1081 (HQLLGDVSPD…GELKVVLVDE (134 aa)) form an N-terminal hotdog fold region. Residues 948 to 1257 (HQLLGDVSPD…FKPVGSDASN (310 aa)) enclose the PKS/mFAS DH domain. The interval 971–1255 (PREMTWLEGH…VKFKPVGSDA (285 aa)) is dehydratase (DH) domain. His-980 serves as the catalytic Proton acceptor; for dehydratase activity. The segment at 1098-1257 (MIPVQPSRLY…FKPVGSDASN (160 aa)) is C-terminal hotdog fold. Asp-1159 acts as the Proton donor; for dehydratase activity in catalysis. The methyltransferase (cMeT) domain stretch occupies residues 1411-1596 (KQSTLWVASI…GFSGIDTMSP (186 aa)). Residues 2125-2298 (TYWLVGLSGA…RSSVVNVGAI (174 aa)) form a ketoreductase (KR)domain region. Residues 2407 to 2486 (EVANVIKQAY…SLVELAAESI (80 aa)) enclose the Carrier domain. An O-(pantetheine 4'-phosphoryl)serine modification is found at Ser-2445. A disordered region spans residues 2492–2543 (PGVPQANANPNGPSSPDSDATESSNQNSDVDVTSTRATSPSTPAATSPDSNV). Polar residues predominate over residues 2497–2523 (ANANPNGPSSPDSDATESSNQNSDVDV). Residues 2524–2541 (TSTRATSPSTPAATSPDS) are compositionally biased toward low complexity. The tract at residues 2585–2817 (LTGCSGLLGH…DLVSVETCCE (233 aa)) is reductase (R) domain.

Requires pantetheine 4'-phosphate as cofactor.

It carries out the reaction 7 malonyl-CoA + acetyl-CoA + 10 AH2 + 5 S-adenosyl-L-methionine + 2 H(+) = dehydroprobetaenone I + 10 A + 5 S-adenosyl-L-homocysteine + 7 CO2 + 8 CoA + 6 H2O. The protein operates within mycotoxin biosynthesis. Functionally, highly reducing polyketide synthase; part of the gene cluster that mediates the biosynthesis of betaenones, phytotoxic polyketides involved in leaf spot disease in sugar beets. The first step of the pathway is the synthesis of dehydroprobetaenone I by the polyketide synthase bet1 and the enoyl reductase bet3 via condensation of one acetyl-CoA starter unit with 7 malonyl-CoA units and 5 methylations. The C-terminal reductase (R) domain of bet1 catalyzes the reductive release of the polyketide chain. Because bet1 lacks a designated enoylreductase (ER) domain, the required activity is provided the enoyl reductase bet3. The short-chain dehydrogenase/reductase bet4 then catalyzes reduction of dehydroprobetaenone I to probetaenone I. The cytochrome P450 monooxygenase bet2 catalyzes successive epoxidation, oxidation (resulting from epoxide opening) and hydroxylation to install a tertiary alcohol in the decaline ring to yield betaenone C from dehydroprobetaenone I and betaenone B from probetaenone I. The FAD-linked oxidoreductase (orf1) is probably responsible for the conversion of betaenone C to betaenone A via an intramolecular aldol reaction between C-1 and C-17 to form the bridged tricyclic system in betaenone A. The polypeptide is Highly reducing polyketide synthase bet1 (Neocamarosporium betae (Beet black rot fungus)).